The chain runs to 155 residues: uncharacterized protein (155 aa).

The tract at residues 135-155 (SQANSKNDSNSKDDLPNPFSV) is disordered.

This is an uncharacterized protein from Acidianus convivator (ATV).